The following is a 139-amino-acid chain: Protein archease (139 aa).

Residues Asp12, Asp138, and Ile139 each contribute to the Ca(2+) site.

It belongs to the archease family.

Functionally, activates the tRNA-splicing ligase complex by facilitating the enzymatic turnover of catalytic subunit RtcB. Acts by promoting the guanylylation of RtcB, a key intermediate step in tRNA ligation. Can also alter the NTP specificity of RtcB such that ATP, dGTP or ITP is used efficiently. The chain is Protein archease from Saccharolobus islandicus (strain Y.N.15.51 / Yellowstone #2) (Sulfolobus islandicus).